A 1296-amino-acid polypeptide reads, in one-letter code: Histone-lysine N-methyltransferase EHMT1 (1296 aa).

Disordered regions lie at residues 1–111 and 170–200; these read MAAA…NHVT and PQTPTTAPTVPGEGSADTEDRKPTASGTDVR. Ala2 carries the post-translational modification N-acetylalanine. The span at 14–31 shows a compositional bias: basic and acidic residues; the sequence is QETKQDCCMKTELLREDT. A Glycyl lysine isopeptide (Lys-Gly) (interchain with G-Cter in SUMO1); alternate cross-link involves residue Lys23. Residue Lys23 forms a Glycyl lysine isopeptide (Lys-Gly) (interchain with G-Cter in SUMO2); alternate linkage. The span at 77 to 89 shows a compositional bias: polar residues; it reads NTRASPQEGTNRV. A compositionally biased stretch (basic and acidic residues) spans 97 to 106; the sequence is VSERDTEVGK. Residues Lys191, Lys229, Lys232, Lys315, and Lys325 each participate in a glycyl lysine isopeptide (Lys-Gly) (interchain with G-Cter in SUMO2) cross-link. The segment at 341 to 470 is disordered; sequence SLEMDSEDED…SSPGSMEQAA (130 aa). Positions 342 to 360 are enriched in acidic residues; that stretch reads LEMDSEDEDSDELEDDEDH. The span at 371–391 shows a compositional bias: basic and acidic residues; it reads EDSRTSKESMSETDRAAKMDG. Residues 392–414 show a composition bias toward acidic residues; the sequence is DSEEEQESPDTGEDEDGGDESDL. A Glycyl lysine isopeptide (Lys-Gly) (interchain with G-Cter in SUMO2) cross-link involves residue Lys430. Ser433 is subject to Phosphoserine. Residues 438-450 show a composition bias toward basic residues; that stretch reads PARKRRRRSRKKP. Ser481 is modified (phosphoserine). Glycyl lysine isopeptide (Lys-Gly) (interchain with G-Cter in SUMO2) cross-links involve residues Lys559, Lys644, Lys659, and Lys729. Residues 653 to 714 form a disordered region; the sequence is LAPGQEKSLA…PTSGLSQGPG (62 aa). ANK repeat units lie at residues 735 to 764, 770 to 799, 803 to 832, 836 to 866, 870 to 899, 903 to 932, 936 to 965, and 969 to 1002; these read FHPKQLYFSARQGELQKVLLMLVDGIDPNF, SKRSPLHAAAEAGHVDICHMLVQAGANIDT, DQRTPLMEAAENNHLDAVKYLIKAGAQVDP, EGSTCLHLAAKKGHYDVVQYLLSNGQMDVNC, GGWTPMIWATEYKHVELVKLLLSKGSDINI, EENICLHWAAFSGCVDIAEILLAAKCDLHA, HGDSPLHIAARENRYDCVVLFLSRDSDVTL, and EGETPLQCASLSSQVWSALQMSKALRDSAPDKPV. Positions 903–905 are histone H3K9me binding; the sequence is EEN. A Phosphoserine modification is found at Ser1046. The 64-residue stretch at 1058-1121 folds into the Pre-SET domain; the sequence is QYCVCVDDCS…NCRNRVVQNG (64 aa). 9 residues coordinate Zn(2+): Cys1060, Cys1062, Cys1066, Cys1071, Cys1073, Cys1103, Cys1107, Cys1109, and Cys1113. In terms of domain architecture, SET spans 1124-1241; it reads ARLQLYRTQD…AGEQLGFDYG (118 aa). S-adenosyl-L-methionine-binding positions include 1134-1136, Tyr1171, and 1198-1199; these read MGW and NH. The interval 1160-1179 is interaction with histone H3; sequence DSEADVREEDSYLFDLDNKD. A Zn(2+)-binding site is contributed by Cys1201. The interval 1240-1243 is interaction with histone H3; sequence YGER. Cys1254 is a Zn(2+) binding site. An S-adenosyl-L-methionine-binding site is contributed by Arg1255. The Zn(2+) site is built by Cys1256 and Cys1261. Positions 1271-1296 are disordered; that stretch reads RQASAAQEPQENGLPDTSSAAAADPL.

Belongs to the class V-like SAM-binding methyltransferase superfamily. As to quaternary structure, interacts with WIZ. Part of the E2F6.com-1 complex in G0 phase composed of E2F6, MGA, MAX, TFDP1, CBX3, BAT8, EHMT1, RING1, RNF2, MBLR, L3MBTL2 and YAF2. Interacts with MPHOSPH8. Interacts with CDYL. Interacts with REST only in the presence of CDYL. Part of a complex containing at least CDYL, REST, WIZ, SETB1, EHMT1 and EHMT2. Heterodimer; heterodimerizes with EHMT2. Interacts (via ANK repeats) with RELA (when monomethylated at 'Lys-310'). Interacts with Baz2b. In terms of tissue distribution, ubiquitous.

The protein resides in the nucleus. It is found in the chromosome. It catalyses the reaction N(6)-methyl-L-lysyl(9)-[histone H3] + S-adenosyl-L-methionine = N(6),N(6)-dimethyl-L-lysyl(9)-[histone H3] + S-adenosyl-L-homocysteine + H(+). It carries out the reaction L-lysyl(9)-[histone H3] + S-adenosyl-L-methionine = N(6)-methyl-L-lysyl(9)-[histone H3] + S-adenosyl-L-homocysteine + H(+). Its activity is regulated as follows. Methyltransferase activity is inhibited by BIX-01294. Efficiently inhibited by compound E72, a BIX-01294 derivative in which the diazepane ring and the benzyl are replaced with a 3-dimethylaminopropyl and a 5-aminopentyl group at sites B and C, respectively. Functionally, histone methyltransferase that specifically mono- and dimethylates 'Lys-9' of histone H3 (H3K9me1 and H3K9me2, respectively) in euchromatin. H3K9me represents a specific tag for epigenetic transcriptional repression by recruiting HP1 proteins to methylated histones. Also weakly methylates 'Lys-27' of histone H3 (H3K27me). Also required for DNA methylation, the histone methyltransferase activity is not required for DNA methylation, suggesting that these 2 activities function independently. Probably targeted to histone H3 by different DNA-binding proteins like E2F6, MGA, MAX and/or DP1. During G0 phase, it probably contributes to silencing of MYC- and E2F-responsive genes, suggesting a role in G0/G1 transition in cell cycle. In addition to the histone methyltransferase activity, also methylates non-histone proteins: mediates dimethylation of 'Lys-373' of p53/TP53. Represses the expression of mitochondrial function-related genes, perhaps by occupying their promoter regions, working in concert with probable chromatin reader Baz2b. In Mus musculus (Mouse), this protein is Histone-lysine N-methyltransferase EHMT1 (Ehmt1).